The primary structure comprises 325 residues: GPI-linked NAD(P)(+)--arginine ADP-ribosyltransferase 1 (325 aa).

An N-terminal signal peptide occupies residues 1–22 (MKIPAMMSLLLVSVGLRDGVQV). 2 cysteine pairs are disulfide-bonded: Cys53-Cys272 and Cys169-Cys219. N-linked (GlcNAc...) asparagine glycosylation is present at Asn65. Residues 73–268 (KVYADGWAQA…IYLRALGKRS (196 aa)) form the TR mART core domain. NAD(+)-binding residues include Tyr117 and Arg174. Active-site residues include Arg174 and Ser197. Ser228 contributes to the NAD(+) binding site. Glu235 is a catalytic residue. N-linked (GlcNAc...) asparagine glycosylation occurs at Asn248. Ser290 carries the GPI-anchor amidated serine lipid modification. Residues 291–325 (APGSISASCSLLLLLLFLVLSALPENPGLQQLTRC) constitute a propeptide, removed in mature form.

It belongs to the Arg-specific ADP-ribosyltransferase family. Abundantly expressed in cardiac and skeletal muscle. Low levels also found in lung.

It localises to the sarcoplasmic reticulum membrane. The enzyme catalyses L-arginyl-[protein] + NAD(+) = N(omega)-(ADP-D-ribosyl)-L-arginyl-[protein] + nicotinamide + H(+). Has ADP-ribosyltransferase activity toward GLP1R. The polypeptide is GPI-linked NAD(P)(+)--arginine ADP-ribosyltransferase 1 (Art1) (Mus musculus (Mouse)).